The following is a 341-amino-acid chain: UDP-N-acetylenolpyruvoylglucosamine reductase (341 aa).

Residues M19 to R191 form the FAD-binding PCMH-type domain. R167 is an active-site residue. Catalysis depends on S241, which acts as the Proton donor. Residue E337 is part of the active site.

It belongs to the MurB family. The cofactor is FAD.

Its subcellular location is the cytoplasm. It catalyses the reaction UDP-N-acetyl-alpha-D-muramate + NADP(+) = UDP-N-acetyl-3-O-(1-carboxyvinyl)-alpha-D-glucosamine + NADPH + H(+). It participates in cell wall biogenesis; peptidoglycan biosynthesis. In terms of biological role, cell wall formation. In Chromobacterium violaceum (strain ATCC 12472 / DSM 30191 / JCM 1249 / CCUG 213 / NBRC 12614 / NCIMB 9131 / NCTC 9757 / MK), this protein is UDP-N-acetylenolpyruvoylglucosamine reductase.